The chain runs to 135 residues: Probable disulfide formation protein (135 aa).

The helical transmembrane segment at 7 to 26 (SYCLYFAWLVSCIGTLMSVY) threads the bilayer. A disulfide bond links cysteine 36 and cysteine 39. Helical transmembrane passes span 41 to 60 (YQRICLFPLVVILGISAYLD) and 67 to 84 (YALPLALIGFCIAIYQVC). An intrachain disulfide couples cysteine 96 to cysteine 101. A helical membrane pass occupies residues 109 to 131 (GFITMPMASALAFFAIANLLIFA).

It belongs to the DsbB family. BdbC subfamily.

The protein localises to the cell inner membrane. Functionally, required for disulfide bond formation in some proteins. The protein is Probable disulfide formation protein of Chlamydia muridarum (strain MoPn / Nigg).